A 344-amino-acid chain; its full sequence is Nuclear distribution protein nudE-like 1-B (344 aa).

Residues 26–189 (YKKSCHDAQE…ELAVRERTSD (164 aa)) adopt a coiled-coil conformation.

The protein belongs to the nudE family. Post-translationally, phosphorylated in mitosis.

It localises to the cytoplasm. It is found in the cytoskeleton. The protein resides in the microtubule organizing center. Its subcellular location is the centrosome. The protein localises to the spindle. In terms of biological role, required for organization of the cellular microtubule array and microtubule anchoring at the centrosome. Positively regulates the activity of the minus-end directed microtubule motor protein dynein. May enhance dynein-mediated microtubule sliding by targeting dynein to the microtubule plus end. The polypeptide is Nuclear distribution protein nudE-like 1-B (ndel1b) (Danio rerio (Zebrafish)).